Reading from the N-terminus, the 294-residue chain is Homeobox-leucine zipper protein ATHB-16 (294 aa).

Residues 1-20 (MKRLSSSDSMCGLISTSTDE) are compositionally biased toward polar residues. The tract at residues 1 to 31 (MKRLSSSDSMCGLISTSTDEQSPRGYGSNYQ) is disordered. Residues 56-115 (LSEKKRRLKVDQVKALEKNFELENKLEPERKTKLAQELGLQPRQVAVWFQNRRARWKTKQ) constitute a DNA-binding region (homeobox). Positions 116 to 151 (LEKDYGVLKGQYDSLRHNFDSLRRDNDSLLQEISKI) are leucine-zipper. Over residues 219–238 (SSDSCDSSAVLNDETSSDNG) the composition is skewed to polar residues. A disordered region spans residues 219 to 241 (SSDSCDSSAVLNDETSSDNGRLT).

Belongs to the HD-ZIP homeobox family. Class I subfamily. As to expression, widely expressed with a lower level in siliques.

The protein resides in the nucleus. In terms of biological role, probable transcription factor that may function as a negative regulator of the flowering time response to photoperiod. May act to repress cell expansion during plant development. The protein is Homeobox-leucine zipper protein ATHB-16 (ATHB-16) of Arabidopsis thaliana (Mouse-ear cress).